Here is a 115-residue protein sequence, read N- to C-terminus: UPF0102 protein SYO3AOP1_0546 (115 aa).

This sequence belongs to the UPF0102 family.

The protein is UPF0102 protein SYO3AOP1_0546 of Sulfurihydrogenibium sp. (strain YO3AOP1).